A 180-amino-acid polypeptide reads, in one-letter code: ATP-dependent protease subunit HslV (180 aa).

Threonine 7 is an active-site residue. Positions 163, 166, and 169 each coordinate Na(+).

The protein belongs to the peptidase T1B family. HslV subfamily. In terms of assembly, a double ring-shaped homohexamer of HslV is capped on each side by a ring-shaped HslU homohexamer. The assembly of the HslU/HslV complex is dependent on binding of ATP.

It localises to the cytoplasm. The catalysed reaction is ATP-dependent cleavage of peptide bonds with broad specificity.. Allosterically activated by HslU binding. Functionally, protease subunit of a proteasome-like degradation complex believed to be a general protein degrading machinery. This is ATP-dependent protease subunit HslV from Alcanivorax borkumensis (strain ATCC 700651 / DSM 11573 / NCIMB 13689 / SK2).